The chain runs to 452 residues: Mitochondrial import inner membrane translocase subunit TIM44 (452 aa).

T128 is modified (phosphothreonine). G166–T173 is an ATP binding site. Phosphoserine is present on S180. K217 carries the post-translational modification N6-succinyllysine.

It belongs to the Tim44 family. As to quaternary structure, probable component of the PAM complex at least composed of a mitochondrial HSP70 protein, GRPEL1 or GRPEL2, TIMM44, TIMM16/PAM16 and TIMM14/DNAJC19. The complex interacts with the TIMM23 component of the TIM23 complex. Interacts with SLC25A4/ANT1 and SLC25A5/ANT2; leading to inhibit the presequence translocase TIMM23, thereby promoting stabilization of PINK1.

It localises to the mitochondrion inner membrane. The protein localises to the mitochondrion matrix. Its function is as follows. Essential component of the PAM complex, a complex required for the translocation of transit peptide-containing proteins from the inner membrane into the mitochondrial matrix in an ATP-dependent manner. Recruits mitochondrial HSP70 to drive protein translocation into the matrix using ATP as an energy source. In Homo sapiens (Human), this protein is Mitochondrial import inner membrane translocase subunit TIM44 (TIMM44).